Reading from the N-terminus, the 559-residue chain is Aspartokinase 3, chloroplastic (559 aa).

A chloroplast-targeting transit peptide spans 1–85 (MAASMQFYGV…LNKTEKKLTC (85 aa)). 3 residues coordinate ATP: lysine 88, glycine 91, and serine 120. Residue glutamate 204 participates in substrate binding. 2 ACT domains span residues 402-480 (ITST…SIIS) and 481-559 (LIGN…AASS).

Belongs to the aspartokinase family. As to expression, highly expressed in xylem of leaves and hypocotyls, stele of roots and in trichomes after bolting. Weak expression in veins and mesophyll cells of caulone leaves, inflorescence stems, sepals, petals and stigmata.

It localises to the plastid. The protein localises to the chloroplast. It catalyses the reaction L-aspartate + ATP = 4-phospho-L-aspartate + ADP. The protein operates within amino-acid biosynthesis; L-lysine biosynthesis via DAP pathway; (S)-tetrahydrodipicolinate from L-aspartate: step 1/4. It functions in the pathway amino-acid biosynthesis; L-methionine biosynthesis via de novo pathway; L-homoserine from L-aspartate: step 1/3. It participates in amino-acid biosynthesis; L-threonine biosynthesis; L-threonine from L-aspartate: step 1/5. Allosterically inhibited by lysine, but not by S-adenosyl-L-methionine (SAM). K(0.5) for lysine in the presence of physiological concentrations of substrates is 7.4 uM. No inhibition by threonine or leucine and no activation or inhibition by alanine, cysteine, isoleucine, serine, valine, methionine, glutamine, asparagine, glutamic acid or arginine. Functionally, involved in the first step of essential amino acids lysine, threonine, methionine and isoleucine synthesis via the aspartate-family pathway. In Arabidopsis thaliana (Mouse-ear cress), this protein is Aspartokinase 3, chloroplastic (AK3).